Here is a 499-residue protein sequence, read N- to C-terminus: Cytochrome P450 monooxygenase notH' (499 aa).

A helical transmembrane segment spans residues 11–31 (LGLEPAGWALALLTSSIIYLF). Asn-296 and Asn-427 each carry an N-linked (GlcNAc...) asparagine glycan. A heme-binding site is contributed by Cys-440.

Belongs to the cytochrome P450 family. The cofactor is heme.

It localises to the membrane. It participates in alkaloid biosynthesis. Functionally, cytochrome P450 monooxygenase; part of the gene cluster that mediates the biosynthesis of notoamide, a fungal indole alkaloid that belongs to a family of natural products containing a characteristic bicyclo[2.2.2]diazaoctane core. The first step of notoamide biosynthesis involves coupling of L-proline and L-tryptophan by the bimodular NRPS notE', to produce cyclo-L-tryptophan-L-proline called brevianamide F. The reverse prenyltransferase notF' then acts as a deoxybrevianamide E synthase and converts brevianamide F to deoxybrevianamide E via reverse prenylation at C-2 of the indole ring leading to the bicyclo[2.2.2]diazaoctane core. Deoxybrevianamide E is further hydroxylated at C-6 of the indole ring, likely catalyzed by the cytochrome P450 monooxygenase notG', to yield 6-hydroxy-deoxybrevianamide E. 6-hydroxy-deoxybrevianamide E is a specific substrate of the prenyltransferase notC' for normal prenylation at C-7 to produce 6-hydroxy-7-prenyl-deoxybrevianamide, also called notoamide S. As the proposed pivotal branching point in notoamide biosynthesis, notoamide S can be diverted to notoamide E through an oxidative pyran ring closure putatively catalyzed by either notH' cytochrome P450 monooxygenase or the notD' FAD-linked oxidoreductase. This step would be followed by an indole 2,3-epoxidation-initiated pinacol-like rearrangement catalyzed by the notB' FAD-dependent monooxygenase leading to the formation of notoamide C and notoamide D. On the other hand notoamide S is converted to notoamide T by notH' (or notD'), a bifunctional oxidase that also functions as the intramolecular Diels-Alderase responsible for generation of (-)-notoamide T. To generate antipodal (+)-notoaminide T, notH (or notD) in Aspergillus strain MF297-2 is expected to catalyze a Diels-Alder reaction leading to the opposite stereochemistry. The remaining oxidoreductase notD' (or notH') likely catalyzes the oxidative pyran ring formation to yield (-)-stephacidin A. The FAD-dependent monooxygenase notI' is highly similar to notB' and is predicted to catalyze a similar conversion from (-)-stephacidin A to (+)-notoamide B via the 2,3-epoxidation of (-)-stephacidin A followed by a pinacol-type rearrangement. Finally, it remains unclear which enzyme could be responsible for the final hydroxylation steps leading to notoamide A and sclerotiamide. This Aspergillus versicolor protein is Cytochrome P450 monooxygenase notH'.